The primary structure comprises 395 residues: Acetate kinase (395 aa).

Position 7 (Asn-7) interacts with Mg(2+). Lys-14 provides a ligand contact to ATP. Arg-92 is a substrate binding site. Asp-149 (proton donor/acceptor) is an active-site residue. Residues 207 to 211, 282 to 284, and 329 to 333 each bind ATP; these read HLGNG, DMR, and GIGEN. Mg(2+) is bound at residue Glu-382.

This sequence belongs to the acetokinase family. As to quaternary structure, homodimer. Mg(2+) is required as a cofactor. It depends on Mn(2+) as a cofactor.

The protein localises to the cytoplasm. It carries out the reaction acetate + ATP = acetyl phosphate + ADP. It participates in metabolic intermediate biosynthesis; acetyl-CoA biosynthesis; acetyl-CoA from acetate: step 1/2. Its function is as follows. Catalyzes the formation of acetyl phosphate from acetate and ATP. Can also catalyze the reverse reaction. This is Acetate kinase from Brachyspira hyodysenteriae (strain ATCC 49526 / WA1).